We begin with the raw amino-acid sequence, 482 residues long: Cis-aconitate decarboxylase-like protein oryM (482 aa).

Belongs to the PrpD family.

It participates in secondary metabolite biosynthesis. Functionally, cis-aconitate decarboxylase-like protein; part of the gene cluster that mediates the biosynthesis of oryzines, natural products with an unusual maleidride backbone. The two subunits of the fungal fatty acid synthase oryfasA and oryfasB probably form octenoic acid. This fatty acid is most likely activated by the acyl-CoA ligase oryP to give octenyl-CoA before the citrate synthase-like protein oryE catalyzes condensation with oxaloacetate to form tricarboxylic acid. The next steps of the pathways are conjectural, but a favorite possible route has been proposed, beginning with decarboxylation and concomitant dehydration by the decarboxylase oryM, followed by tautomerization, which may lead to the production of a diene intermediate. Reduction of this diene intermediate could give the known metabolite piliformic acid. On the pathway to oryzine B and oryzine A, however, hydroxylation of the diene by the alpha-ketoglutarate-dependent dioxygenase oryG and lactonisation by the lactonohydrolases oryH or oryL could give oryzine B directly. Finally, enoyl reduction by the dehydrogenase oryD would then convert oryzine B into oryzine A. The polypeptide is Cis-aconitate decarboxylase-like protein oryM (Aspergillus oryzae (strain ATCC 42149 / RIB 40) (Yellow koji mold)).